Consider the following 261-residue polypeptide: Pantothenate synthetase (261 aa).

29 to 36 (MGALHNGH) lines the ATP pocket. The Proton donor role is filled by His36. Gln60 is a (R)-pantoate binding site. Position 60 (Gln60) interacts with beta-alanine. 147 to 150 (GEKD) provides a ligand contact to ATP. Position 153 (Gln153) interacts with (R)-pantoate. 184 to 187 (LSSR) is an ATP binding site.

It belongs to the pantothenate synthetase family. In terms of assembly, homodimer.

It is found in the cytoplasm. The catalysed reaction is (R)-pantoate + beta-alanine + ATP = (R)-pantothenate + AMP + diphosphate + H(+). Its pathway is cofactor biosynthesis; (R)-pantothenate biosynthesis; (R)-pantothenate from (R)-pantoate and beta-alanine: step 1/1. In terms of biological role, catalyzes the condensation of pantoate with beta-alanine in an ATP-dependent reaction via a pantoyl-adenylate intermediate. This Francisella philomiragia subsp. philomiragia (strain ATCC 25017 / CCUG 19701 / FSC 153 / O#319-036) protein is Pantothenate synthetase.